A 224-amino-acid polypeptide reads, in one-letter code: Glycerol-3-phosphate acyltransferase (224 aa).

Helical transmembrane passes span phenylalanine 14–isoleucine 34, threonine 64–valine 84, methionine 98–alanine 118, leucine 127–isoleucine 147, and leucine 160–leucine 180.

This sequence belongs to the PlsY family. As to quaternary structure, probably interacts with PlsX.

It is found in the cell inner membrane. It catalyses the reaction an acyl phosphate + sn-glycerol 3-phosphate = a 1-acyl-sn-glycero-3-phosphate + phosphate. The protein operates within lipid metabolism; phospholipid metabolism. In terms of biological role, catalyzes the transfer of an acyl group from acyl-phosphate (acyl-PO(4)) to glycerol-3-phosphate (G3P) to form lysophosphatidic acid (LPA). This enzyme utilizes acyl-phosphate as fatty acyl donor, but not acyl-CoA or acyl-ACP. This chain is Glycerol-3-phosphate acyltransferase, found in Albidiferax ferrireducens (strain ATCC BAA-621 / DSM 15236 / T118) (Rhodoferax ferrireducens).